The chain runs to 232 residues: Noggin (232 aa).

An N-terminal signal peptide occupies residues 1–27 (MERCPSLGVTLYALVVVLGLRAAPAGG). N-linked (GlcNAc...) asparagine glycosylation occurs at Asn-62. Positions 77-99 (GFMATSPPEDRPGGGGGPAGGAE) are disordered. 4 disulfide bridges follow: Cys-155–Cys-192, Cys-178–Cys-228, Cys-184–Cys-230, and Cys-207–Cys-215.

The protein belongs to the noggin family. In terms of assembly, homodimer. Interacts with GDF5; inhibits chondrocyte differentiation. In terms of tissue distribution, expressed in condensing cartilage and immature chondrocytes.

It is found in the secreted. In terms of biological role, essential for cartilage morphogenesis and joint formation. Inhibitor of bone morphogenetic proteins (BMP) signaling which is required for growth and patterning of the neural tube and somite. Inhibits chondrocyte differentiation through its interaction with GDF5 and, probably, GDF6. The sequence is that of Noggin (Nog) from Mus musculus (Mouse).